The chain runs to 1872 residues: Ral GTPase-activating protein subunit alpha-2 (1872 aa).

Positions 350–370 (DGAGSTEQDKSHSNSSTLSDR) are disordered. Phosphoserine is present on residues Ser-373, Ser-376, and Ser-379. Residues 445-469 (PDKKDVAQEDADKLGLSETDSKEAS) show a composition bias toward basic and acidic residues. The disordered stretch occupies residues 445 to 481 (PDKKDVAQEDADKLGLSETDSKEASSESSGHKRSSSW). At Ser-486 the chain carries Phosphoserine. Ser-696 is subject to Phosphoserine; by PKB. 2 disordered regions span residues 711–730 (FRSA…NTVR) and 758–813 (QQVP…GITM). Residue Thr-715 is modified to Phosphothreonine; by PKB. Composition is skewed to polar residues over residues 758–768 (QQVPRSSSTSD) and 775–795 (SDSS…SEPK). The segment covering 796–810 (SVQESKGHVTHEHEG) has biased composition (basic and acidic residues). Phosphoserine occurs at positions 819 and 820. The tract at residues 831-851 (QQAHGRCRQRQTSESTGSDTV) is disordered. Over residues 840–849 (RQTSESTGSD) the composition is skewed to polar residues. Ser-1592 bears the Phosphoserine mark. Residues 1634–1842 (LKNLDSRQCR…EERALYLEAI (209 aa)) form the Rap-GAP domain.

As to quaternary structure, component of the heterodimeric RalGAP2 complex with RALGAPB. Heterodimerization is required for activity. Abundantly expressed in testis, pancreas, lung, thymus, brown fat, and white fat.

It is found in the cytoplasm. Functionally, catalytic subunit of the heterodimeric RalGAP2 complex which acts as a GTPase activator for the Ras-like small GTPases RALA and RALB. The sequence is that of Ral GTPase-activating protein subunit alpha-2 (Ralgapa2) from Mus musculus (Mouse).